We begin with the raw amino-acid sequence, 296 residues long: Probable lipid kinase YegS-like (296 aa).

Positions 1–130 (MPHTLLILNG…IDLAQVNDKH (130 aa)) constitute a DAGKc domain. Residues Thr37, 63–69 (GDGTINE), and Thr92 each bind ATP. Mg(2+)-binding residues include Leu212, Asp215, and Leu217. Glu268 functions as the Proton acceptor in the catalytic mechanism.

It belongs to the diacylglycerol/lipid kinase family. YegS lipid kinase subfamily. Requires Mg(2+) as cofactor. Ca(2+) is required as a cofactor.

The protein localises to the cytoplasm. Its function is as follows. Probably phosphorylates lipids; the in vivo substrate is unknown. The sequence is that of Probable lipid kinase YegS-like from Yersinia enterocolitica serotype O:8 / biotype 1B (strain NCTC 13174 / 8081).